Here is a 306-residue protein sequence, read N- to C-terminus: D-alanine--D-alanine ligase (306 aa).

The 200-residue stretch at 104 to 303 folds into the ATP-grasp domain; the sequence is KMLWKAFGLP…FEQLVVKILE (200 aa). An ATP-binding site is contributed by 134-189; that stretch reads VAKLGLPLMVKPSLEGSSVGLTKVKAVEELKSAVEYALKFDNTILIEEWLAGDELT. Mg(2+)-binding residues include aspartate 257, glutamate 270, and asparagine 272.

This sequence belongs to the D-alanine--D-alanine ligase family. Mg(2+) serves as cofactor. Mn(2+) is required as a cofactor.

It is found in the cytoplasm. The catalysed reaction is 2 D-alanine + ATP = D-alanyl-D-alanine + ADP + phosphate + H(+). Its pathway is cell wall biogenesis; peptidoglycan biosynthesis. In terms of biological role, cell wall formation. The sequence is that of D-alanine--D-alanine ligase from Haemophilus influenzae (strain PittGG).